We begin with the raw amino-acid sequence, 391 residues long: Pyruvate dehydrogenase E1 component subunit alpha, testis-specific form, mitochondrial (391 aa).

The N-terminal 30 residues, 1-30 (MRKMLATVLSQVFSGMVQKPALRGLLSSLK), are a transit peptide targeting the mitochondrion. Residues His-93, Tyr-119, Arg-120, Ala-158, Gly-166, Val-168, Asp-197, Gly-198, Ala-199, Asn-226, and Tyr-228 each coordinate pyruvate. Tyr-119 and Arg-120 together coordinate thiamine diphosphate. 6 residues coordinate thiamine diphosphate: Gly-166, Val-168, Asp-197, Gly-198, Ala-199, and Asn-226. Asp-197 contacts Mg(2+). The Mg(2+) site is built by Asn-226 and Tyr-228. Position 293 (His-293) interacts with thiamine diphosphate. 2 positions are modified to phosphoserine: Ser-294 and Ser-296. Phosphoserine; by PDK3 is present on Ser-301.

In terms of assembly, heterotetramer of two PDHA2 and two PDHB subunits. The heterotetramer interacts with DLAT, and is part of the multimeric pyruvate dehydrogenase complex that contains multiple copies of pyruvate dehydrogenase (E1), dihydrolipoamide acetyltransferase (DLAT, E2) and lipoamide dehydrogenase (DLD, E3). These subunits are bound to an inner core composed of about 48 DLAT and 12 PDHX molecules. The cofactor is thiamine diphosphate. Requires Mg(2+) as cofactor. In terms of tissue distribution, testis.

It localises to the mitochondrion matrix. It carries out the reaction N(6)-[(R)-lipoyl]-L-lysyl-[protein] + pyruvate + H(+) = N(6)-[(R)-S(8)-acetyldihydrolipoyl]-L-lysyl-[protein] + CO2. Its activity is regulated as follows. Pyruvate dehydrogenase activity is inhibited by phosphorylation of PDHA2; it is reactivated by dephosphorylation. Functionally, the pyruvate dehydrogenase complex catalyzes the overall conversion of pyruvate to acetyl-CoA and CO(2), and thereby links the glycolytic pathway to the tricarboxylic cycle. The sequence is that of Pyruvate dehydrogenase E1 component subunit alpha, testis-specific form, mitochondrial (Pdha2) from Rattus norvegicus (Rat).